The chain runs to 28 residues: Aryl acylamidase (28 aa).

In terms of assembly, homodimer.

It catalyses the reaction an anilide + H2O = aniline + a carboxylate + H(+). The polypeptide is Aryl acylamidase (Nocardia globerula).